Reading from the N-terminus, the 254-residue chain is Glucosamine-6-phosphate deaminase (254 aa).

The Proton acceptor; for enolization step role is filled by D65. N134 acts as the For ring-opening step in catalysis. H136 serves as the catalytic Proton acceptor; for ring-opening step. E141 acts as the For ring-opening step in catalysis.

The protein belongs to the glucosamine/galactosamine-6-phosphate isomerase family. NagB subfamily.

It carries out the reaction alpha-D-glucosamine 6-phosphate + H2O = beta-D-fructose 6-phosphate + NH4(+). The protein operates within amino-sugar metabolism; N-acetylneuraminate degradation; D-fructose 6-phosphate from N-acetylneuraminate: step 5/5. Catalyzes the reversible isomerization-deamination of glucosamine 6-phosphate (GlcN6P) to form fructose 6-phosphate (Fru6P) and ammonium ion. The chain is Glucosamine-6-phosphate deaminase from Corynebacterium aurimucosum (strain ATCC 700975 / DSM 44827 / CIP 107346 / CN-1) (Corynebacterium nigricans).